We begin with the raw amino-acid sequence, 475 residues long: Putative response regulator NtrX-like (475 aa).

The 117-residue stretch at 5-121 folds into the Response regulatory domain; it reads DVLILDDEES…KLIILLKRAC (117 aa). Residue Asp54 is modified to 4-aspartylphosphate. The 227-residue stretch at 143–369 folds into the Sigma-54 factor interaction domain; that stretch reads LVGGCSVTLK…LRNVVEWTLI (227 aa). ATP contacts are provided by residues 171–178 and 232–241; these read GKVGSGKE and ANNGTLYIDE.

Its function is as follows. Member of the two-component regulatory system RT0550/RT0603. The polypeptide is Putative response regulator NtrX-like (Rickettsia typhi (strain ATCC VR-144 / Wilmington)).